The sequence spans 117 residues: cAMP-regulated phosphoprotein 19-B (117 aa).

The segment covering 1–37 (MSRDNQEIKAPEESSAEEQKEMDDKVTSPEKAEEIKL) has biased composition (basic and acidic residues). The disordered stretch occupies residues 1-54 (MSRDNQEIKAPEESSAEEQKEMDDKVTSPEKAEEIKLKSRYPNIGPKPGGSDFL). The residue at position 28 (serine 28) is a Phosphoserine; by CDK2. A Phosphoserine; by GWL modification is found at serine 67. Positions 77–117 (MKNKQLPTAAPDKTEVTGDHIPTPQDLPQRKPSLVASKLAG) are disordered. A Phosphothreonine; by CDK2 modification is found at threonine 99. Serine 109 bears the Phosphoserine; by PKA mark.

Belongs to the endosulfine family. In terms of assembly, interacts (when phosphorylated at Ser-67) with ppp2r2d. Phosphorylation at Ser-67 by gwl during mitosis is essential for interaction with ppp2r2d (PR55-delta) and subsequent inactivation of PP2A.

The protein resides in the cytoplasm. Protein phosphatase inhibitor that specifically inhibits protein phosphatase 2A (PP2A) during mitosis. When phosphorylated at Ser-67 during mitosis, specifically interacts with ppp2r2d (PR55-delta) and inhibits its activity, leading to inactivation of PP2A, an essential condition to keep cyclin-B1-CDK1 activity high during M phase. This is cAMP-regulated phosphoprotein 19-B (arpp19-b) from Xenopus laevis (African clawed frog).